Here is a 602-residue protein sequence, read N- to C-terminus: Elongation factor 4 (602 aa).

The 190-residue stretch at 7–196 (SKIRNFCIIA…HPQNEIKSPT (190 aa)) folds into the tr-type G domain. GTP-binding positions include 19 to 24 (DHGKST) and 136 to 139 (NKVD).

It belongs to the TRAFAC class translation factor GTPase superfamily. Classic translation factor GTPase family. LepA subfamily.

It is found in the cell inner membrane. It catalyses the reaction GTP + H2O = GDP + phosphate + H(+). Functionally, required for accurate and efficient protein synthesis under certain stress conditions. May act as a fidelity factor of the translation reaction, by catalyzing a one-codon backward translocation of tRNAs on improperly translocated ribosomes. Back-translocation proceeds from a post-translocation (POST) complex to a pre-translocation (PRE) complex, thus giving elongation factor G a second chance to translocate the tRNAs correctly. Binds to ribosomes in a GTP-dependent manner. In Prochlorococcus marinus (strain MIT 9515), this protein is Elongation factor 4.